The chain runs to 335 residues: MSQRISLTRYLVEQQRREGHIPAQLRLLLEVVARACKGISQSVNKGALGGVLGTAGSENVQGEVQKKLDIIANEVLIEANEWGGHLAAMASEEMDSIYLVPNRYPQGEYLLLFDPLDGSSNIDVNVSIGTIFSVLKKPDDHAGVEEKDFLQPGNKQVAAGYCVYGPQTTLVLTVGDGVAMFTLDREQGSFVLIEENVRIPEDTKEFAINMSNMRHWDAPVKRYIDECLQGTEGPRGKDFNMRWVASMVADVHRILSRGGIFMYPWDKREPEKAGKLRLMYEANPMGWIVEQAGGSATNGKQRILDIQPGKLHERVSVILGSKNEVERVTGYHSGL.

Glutamate 92, aspartate 114, leucine 116, and aspartate 117 together coordinate Mg(2+). Residues 117 to 120 (DGSS), asparagine 209, and lysine 275 contribute to the substrate site. Residue glutamate 281 participates in Mg(2+) binding.

Belongs to the FBPase class 1 family. In terms of assembly, homotetramer. Mg(2+) serves as cofactor.

It is found in the cytoplasm. The enzyme catalyses beta-D-fructose 1,6-bisphosphate + H2O = beta-D-fructose 6-phosphate + phosphate. It functions in the pathway carbohydrate biosynthesis; gluconeogenesis. The chain is Fructose-1,6-bisphosphatase class 1 from Polaromonas sp. (strain JS666 / ATCC BAA-500).